The primary structure comprises 167 residues: Protein-export protein SecB (167 aa).

This sequence belongs to the SecB family. As to quaternary structure, homotetramer, a dimer of dimers. One homotetramer interacts with 1 SecA dimer.

It localises to the cytoplasm. Its function is as follows. One of the proteins required for the normal export of preproteins out of the cell cytoplasm. It is a molecular chaperone that binds to a subset of precursor proteins, maintaining them in a translocation-competent state. It also specifically binds to its receptor SecA. This is Protein-export protein SecB from Cellvibrio japonicus (strain Ueda107) (Pseudomonas fluorescens subsp. cellulosa).